The primary structure comprises 523 residues: Vanin-like protein 3 (523 aa).

Positions 1–19 (MAVFLRRFLWLISFTLVLT) are cleaved as a signal peptide. The CN hydrolase domain occupies 29–298 (YIAGVVEYRP…RKLLLAKVPL (270 aa)). N-linked (GlcNAc...) asparagine glycosylation occurs at Asn64. Glu74 functions as the Proton acceptor in the catalytic mechanism. The active-site Proton donor is Lys167. N-linked (GlcNAc...) asparagine glycans are attached at residues Asn177 and Asn192. Residue Cys200 is the Nucleophile of the active site. N-linked (GlcNAc...) asparagine glycans are attached at residues Asn330 and Asn468. Asn498 carries GPI-anchor amidated asparagine lipidation. The propeptide at 499 to 523 (GGAGRLGTLLFLLITPLIMMHLFRE) is removed in mature form.

It belongs to the carbon-nitrogen hydrolase superfamily. BTD/VNN family. Expressed in third instar larvae.

The protein localises to the cell membrane. The sequence is that of Vanin-like protein 3 from Drosophila melanogaster (Fruit fly).